The primary structure comprises 769 residues: Spastin (769 aa).

Residues 1-100 form a disordered region; it reads MVRTKNQSSS…TSGNVPRGGQ (100 aa). The Cytoplasmic portion of the chain corresponds to 1–113; the sequence is MVRTKNQSSS…KQNLYVVSFP (113 aa). The interval 1–201 is required for localization to punctate cytoplasmic foci; sequence MVRTKNQSSS…QTLEMAASRG (201 aa). Residues 8 to 19 show a composition bias toward low complexity; the sequence is SSSSSASSSTKS. Residues 24–33 are compositionally biased toward gly residues; it reads SGGGGGGGGS. Residues 54–63 show a composition bias toward polar residues; the sequence is SSKLSSNRQR. The span at 64-78 shows a compositional bias: low complexity; that stretch reads TTTTITTTTTTPGSS. Residues 114–134 constitute an intramembrane region (helical); sequence IIFLFNVLRSLIYQLFCIFRY. Over 135–769 the chain is Cytoplasmic; it reads LYGASTKVIY…WSQDYGDITI (635 aa). A sufficient for interaction with microtubules and microtubule severing region spans residues 199 to 769; it reads SRGGTGAGGY…WSQDYGDITI (571 aa). The 76-residue stretch at 224–299 folds into the MIT domain; it reads HRRAFEYISK…SMARDRLHFL (76 aa). The disordered stretch occupies residues 314–462; sequence KEQPKKQLPH…NAASGSGSGA (149 aa). Over residues 334-344 the composition is skewed to low complexity; the sequence is TTTSSGSSSSS. 2 stretches are compositionally biased toward polar residues: residues 395-413 and 434-450; these read NKSQ…STSV and QFSS…RTPI. Low complexity predominate over residues 451–462; that stretch reads NNNAASGSGSGA. The segment at 452-466 is required for interaction with microtubules; that stretch reads NNAASGSGSGASTPL. 534 to 541 is a binding site for ATP; it reads GPPGNGKT.

This sequence belongs to the AAA ATPase family. Spastin subfamily. Homohexamer. The homohexamer is stabilized by ATP-binding. The homohexamer may adopt a ring conformation through which microtubules pass prior to being severed. Interacts with microtubules. Interacts with atl; may be involved in microtubule dynamics.

It localises to the membrane. The protein localises to the cytoplasm. Its subcellular location is the cytoskeleton. The protein resides in the microtubule organizing center. It is found in the centrosome. It localises to the chromosome. The protein localises to the lipid droplet. It catalyses the reaction n ATP + n H2O + a microtubule = n ADP + n phosphate + (n+1) alpha/beta tubulin heterodimers.. In terms of biological role, ATP-dependent microtubule severing protein. Stimulates microtubule minus-end depolymerization and poleward microtubule flux in the mitotic spindle. Regulates microtubule stability in the neuromuscular junction synapse. Involved in lipid metabolism by regulating the size and distribution of lipid droplets. Involved in axon regeneration by regulating microtubule severing. This Drosophila virilis (Fruit fly) protein is Spastin.